The chain runs to 126 residues: Large ribosomal subunit protein mL55 (126 aa).

Residues 1–34 constitute a mitochondrion transit peptide; that stretch reads MSAKGSLLRLLWQCGMTRAAPESCRYLYTSSWRA. Position 86 is a phosphoserine (serine 86).

Belongs to the mitochondrion-specific ribosomal protein mL55 family. As to quaternary structure, component of the mitochondrial ribosome large subunit (39S) which comprises a 16S rRNA and about 50 distinct proteins.

The protein localises to the mitochondrion. The sequence is that of Large ribosomal subunit protein mL55 (MRPL55) from Bos taurus (Bovine).